A 263-amino-acid polypeptide reads, in one-letter code: Acyl-[acyl-carrier-protein]--UDP-N-acetylglucosamine O-acyltransferase (263 aa).

This sequence belongs to the transferase hexapeptide repeat family. LpxA subfamily. In terms of assembly, homotrimer.

Its subcellular location is the cytoplasm. The enzyme catalyses a (3R)-hydroxyacyl-[ACP] + UDP-N-acetyl-alpha-D-glucosamine = a UDP-3-O-[(3R)-3-hydroxyacyl]-N-acetyl-alpha-D-glucosamine + holo-[ACP]. It participates in glycolipid biosynthesis; lipid IV(A) biosynthesis; lipid IV(A) from (3R)-3-hydroxytetradecanoyl-[acyl-carrier-protein] and UDP-N-acetyl-alpha-D-glucosamine: step 1/6. Involved in the biosynthesis of lipid A, a phosphorylated glycolipid that anchors the lipopolysaccharide to the outer membrane of the cell. The sequence is that of Acyl-[acyl-carrier-protein]--UDP-N-acetylglucosamine O-acyltransferase from Stenotrophomonas maltophilia (strain R551-3).